Consider the following 101-residue polypeptide: Small ribosomal subunit protein uS14 (101 aa).

This sequence belongs to the universal ribosomal protein uS14 family. In terms of assembly, part of the 30S ribosomal subunit. Contacts proteins S3 and S10.

Functionally, binds 16S rRNA, required for the assembly of 30S particles and may also be responsible for determining the conformation of the 16S rRNA at the A site. The sequence is that of Small ribosomal subunit protein uS14 from Novosphingobium aromaticivorans (strain ATCC 700278 / DSM 12444 / CCUG 56034 / CIP 105152 / NBRC 16084 / F199).